The primary structure comprises 616 residues: Chaperone protein HscA (616 aa).

This sequence belongs to the heat shock protein 70 family.

In terms of biological role, chaperone involved in the maturation of iron-sulfur cluster-containing proteins. Has a low intrinsic ATPase activity which is markedly stimulated by HscB. Involved in the maturation of IscU. This chain is Chaperone protein HscA, found in Salmonella typhimurium (strain LT2 / SGSC1412 / ATCC 700720).